The primary structure comprises 185 residues: Elongation factor P (185 aa).

This sequence belongs to the elongation factor P family.

The protein resides in the cytoplasm. Its pathway is protein biosynthesis; polypeptide chain elongation. Involved in peptide bond synthesis. Stimulates efficient translation and peptide-bond synthesis on native or reconstituted 70S ribosomes in vitro. Probably functions indirectly by altering the affinity of the ribosome for aminoacyl-tRNA, thus increasing their reactivity as acceptors for peptidyl transferase. The chain is Elongation factor P from Streptococcus equi subsp. equi (strain 4047).